Reading from the N-terminus, the 443-residue chain is Minovincinine 19-hydroxy-O-acetyltransferase (443 aa).

His-157 functions as the Proton acceptor in the catalytic mechanism. Residues 215-222 (RKRFLFSP) carry the Nuclear localization signal motif. The stretch at 316 to 343 (TKLVIGELRKAKDKLKNLSQEKLNYVAR) forms a coiled coil. Asp-384 (proton acceptor) is an active-site residue.

This sequence belongs to the plant acyltransferase family. As to quaternary structure, monomer. Expressed in cortical cells of the root tip, especially in hairy roots, as well as in etiolated seedlings. Mostly expressed in roots, and, at lower levels, in leaves.

The protein resides in the cytoplasm. The protein localises to the nucleus. The catalysed reaction is (+)-minovincinine + acetyl-CoA = (+)-echitovenine + CoA. It participates in alkaloid biosynthesis. Its function is as follows. Component of the monoterpenoid indole alkaloids (MIAs, e.g. echitovenine, tabersonine, lochnericine, 19-hydroxytabersonine and horhammericine) biosynthetic pathway; MIAs are used in cancer treatment and other medical applications. Acyltransferase catalyzing the conversion of (+)-minovincinine to (+)-echitovenine. The sequence is that of Minovincinine 19-hydroxy-O-acetyltransferase from Catharanthus roseus (Madagascar periwinkle).